The chain runs to 608 residues: MEMESSAASTRFHQPHMERKMSAMTCEIFNELRLEGKLCDVVIKVNGFEFNAHKNILCSCSSYFRALFTSGWNNTEKKVYNIPGISPDMMKLIIEYAYTRTVPITPDNVEKLLAAADQFNIMGIVRGCCEFLKSELCLDNCIGICKFTDYYYCPELRQKAYMFILHNFEEMVKVSAEFLELSVTELKDIIEKDELNVKQEDAVFEAILKWISHDPQNRKQHISVLLPKVRLALMHAEYFMNNVKMNDYVKDSEECKPVIINALKAMYDLNMNGPSNSDFTNPLTRPRLPYAILFAIGGWSGGSPTNAIEAYDARADRWVNVTCEEESPRAYHGAAYLKGYVYIIGGFDSVDYFNSVKRFDPVKKTWHQVAPMHSRRCYVSVTVLSNFIYAMGGFDGYVRLNTAERYEPETNQWTLIAPMHEQRSDASATTLYGKVYICGGFNGNECLFTAEVYNTESNQWTVIAPMRSRRSGIGVIAYGEHVYAVGGFDGANRLRSAEAYSPVANTWRTIPTMFNPRSNFGIEVVDDLLFVVGGFNGFTTTFNVECYDEKTDEWYDAHDMSIYRSALSCCVVPGLANVGEYAARRDNFTGLALRDEVKYSASTSTLPV.

The region spanning 39–106 (CDVVIKVNGF…AYTRTVPITP (68 aa)) is the BTB domain. Kelch repeat units follow at residues 292-339 (ILFA…YLKG), 340-386 (YVYI…VLSN), 388-433 (IYAM…TLYG), 434-480 (KVYI…AYGE), 481-527 (HVYA…VVDD), and 529-574 (LFVV…VVPG). A Phosphoserine modification is found at serine 501.

As to quaternary structure, self-associates. Interacts with CUL3; indicative for the participation in an E3 ubiquitin ligase complex.

It localises to the cytoplasm. It functions in the pathway protein modification; protein ubiquitination. Its function is as follows. May be a substrate-specific adapter of a CUL3-based E3 ubiquitin-protein ligase complex which mediates the ubiquitination and subsequent proteasomal degradation of target proteins during spermatogenesis. In Rattus norvegicus (Rat), this protein is Kelch-like protein 10 (Klhl10).